A 542-amino-acid polypeptide reads, in one-letter code: Protein phosphatase 1G (542 aa).

G2 carries N-myristoyl glycine lipidation. R22 bears the Omega-N-methylarginine mark. Residues 26-502 (PYGFSAMQGW…DNMTCIIICF (477 aa)) enclose the PPM-type phosphatase domain. Mn(2+) contacts are provided by D60 and G61. Disordered regions lie at residues 117–136 (IAGRPTEDEDDKDKVADEDD) and 164–325 (CQKV…SDSG). Position 122 is a phosphothreonine (T122). Acidic residues-rich tracts occupy residues 123–136 (EDEDDKDKVADEDD) and 259–309 (DSED…DEEM). N6-acetyllysine is present on K380. Residues D438 and D493 each coordinate Mn(2+). The tract at residues 513–542 (ESGKRKLEEALSTEGAEDTGNSDKKKAKRD) is disordered. At S524 the chain carries Phosphoserine.

The protein belongs to the PP2C family. In terms of assembly, interacts with NOL3; may dephosphorylate NOL3. Mg(2+) serves as cofactor. Requires Mn(2+) as cofactor. As to expression, highly expressed in testis. Low level of expression in kidney. Also expressed in a number of tissues undergoing proliferation including embryo, uterus at pregnancy, placenta, and ovaries.

It is found in the nucleus. The protein resides in the membrane. It carries out the reaction O-phospho-L-seryl-[protein] + H2O = L-seryl-[protein] + phosphate. It catalyses the reaction O-phospho-L-threonyl-[protein] + H2O = L-threonyl-[protein] + phosphate. Functionally, may be involved in regulation of cell cycle. This chain is Protein phosphatase 1G (Ppm1g), found in Mus musculus (Mouse).